The following is a 384-amino-acid chain: D-galactosamine-6-phosphate deaminase AgaS (384 aa).

SIS domains follow at residues 45–197 (LEPL…SQTF) and 215–364 (SEGV…PDTP).

It belongs to the SIS family. AgaS subfamily.

The catalysed reaction is D-galactosamine 6-phosphate + H2O = D-tagatopyranose 1-phosphate + NH4(+). Catalyzes the isomerization-deamination of galactosamine 6-phosphate to form tagatofuranose 6-phosphate and ammonium ion. This Escherichia coli O157:H7 protein is D-galactosamine-6-phosphate deaminase AgaS.